The sequence spans 446 residues: Glutamyl-tRNA reductase (446 aa).

Substrate is bound by residues 49 to 52 (TCNR), Ser-109, 114 to 116 (ETQ), and Gln-120. The active-site Nucleophile is the Cys-50. 189 to 194 (GAGEMA) contributes to the NADP(+) binding site.

This sequence belongs to the glutamyl-tRNA reductase family. Homodimer.

The catalysed reaction is (S)-4-amino-5-oxopentanoate + tRNA(Glu) + NADP(+) = L-glutamyl-tRNA(Glu) + NADPH + H(+). It functions in the pathway porphyrin-containing compound metabolism; protoporphyrin-IX biosynthesis; 5-aminolevulinate from L-glutamyl-tRNA(Glu): step 1/2. Catalyzes the NADPH-dependent reduction of glutamyl-tRNA(Glu) to glutamate 1-semialdehyde (GSA). This is Glutamyl-tRNA reductase from Macrococcus caseolyticus (strain JCSC5402) (Macrococcoides caseolyticum).